Here is a 414-residue protein sequence, read N- to C-terminus: Putative competence-damage inducible protein (414 aa).

This sequence belongs to the CinA family.

The polypeptide is Putative competence-damage inducible protein (Listeria monocytogenes serovar 1/2a (strain ATCC BAA-679 / EGD-e)).